The sequence spans 3343 residues: Breast cancer type 2 susceptibility protein homolog (3343 aa).

The interval 1–40 (MTVEYKRRPTFWEIFKARCSTADLGPISLNWFEELFSEAP) is interaction with PALB2. The segment at 40–60 (PPYNTEHPEESEYKPQGHEPQ) is disordered. Basic and acidic residues predominate over residues 45-56 (EHPEESEYKPQG). Ser70 bears the Phosphoserine mark. The tract at residues 348–381 (IEPRDSEPLDPSVTNQKPLYSQSGDISSEAGQCS) is disordered. Positions 359–381 (SVTNQKPLYSQSGDISSEAGQCS) are enriched in polar residues. 2 positions are modified to phosphoserine: Ser475 and Ser736. Positions 622 to 982 (PDSSIKRSNL…DKWSEFLDPL (361 aa)) are interaction with NPM1. 8 BRCA2 repeats span residues 984-1018 (NHKL…DIEE), 1197-1231 (KEME…DIEN), 1405-1439 (MKEF…QETE), 1503-1537 (KEPT…ETQY), 1645-1669 (CYTG…WLRE), 1828-1845 (FITT…IFTD), 1939-1973 (PSRT…EIDG), and 2019-2053 (SSFV…EFDL). An interaction with RAD51 region spans residues 985–2050 (HKLGGSFRTA…LHKVKGMLEE (1066 aa)). Disordered regions lie at residues 2059–2138 (TLQH…VLGT), 2297–2356 (PFCS…SDKS), and 2377–2407 (DSKN…PQFN). Residue Ser2063 is modified to Phosphoserine. Polar residues-rich tracts occupy residues 2083–2094 (PEYSVSSKLQKT) and 2101–2125 (SPSN…QLSQ). The interaction with HSF2BP stretch occupies residues 2233–2300 (RKRGGMAGVA…EPVTCGPFCS (68 aa)). Composition is skewed to polar residues over residues 2307 to 2320 (TQSP…QGLQ) and 2332 to 2342 (GKSSSNPTVSA). The tract at residues 2313 to 2475 (TSPAQGLQSK…SPKQLYMYGV (163 aa)) is interaction with FANCD2. The segment covering 2344–2356 (RSERTRHSVSDKS) has biased composition (basic and acidic residues). An interaction with SEM1 region spans residues 2411-2762 (MSSLQNARDL…QRVYPLQWVE (352 aa)). The short motif at 2612–2628 (AAKTLVLCVSDIISLST) is the Nuclear export signal; masked by interaction with SEM1 element. The tract at residues 3114–3163 (DSPKWSTPNKDPTREPYPASTCSASDLASGGQLPRSSPTDQQSYRSPLSC) is disordered. Residues 3147-3163 (PRSSPTDQQSYRSPLSC) are compositionally biased toward polar residues. A Phosphoserine; by CDK1 and CDK2 modification is found at Ser3222. Disordered stretches follow at residues 3231–3255 (PPRS…WSRA) and 3289–3343 (VGGS…PDYS). Ser3250 bears the Phosphoserine mark. Residues 3295 to 3310 (VFPSDSTRTEGPSAST) are compositionally biased toward polar residues. Positions 3318–3334 (SKRESLRDCRDDSDGKL) are enriched in basic and acidic residues.

Monomer and dimer. Interacts with RAD51; regulates RAD51 recruitment and function at sites of DNA repair. Interacts with SEM1, WDR16, USP11, DMC1, ROCK2 and NPM1. Interacts with both nonubiquitinated and monoubiquitinated FANCD2; this complex also includes XRCC3 and phosphorylated FANCG. Part of a BRCA complex containing BRCA1, BRCA2 and PALB2. Component of the homologous recombination repair (HR) complex composed of ERCC5/XPG, BRCA2, PALB2, DSS1 and RAD51. Within the complex, interacts with ERCC5/XPG and PALB2. Interacts directly with PALB2 which may serve as a scaffold for a HR complex containing PALB2, BRCA2, RAD51C, RAD51 and XRCC3. Interacts with BRCA1 only in the presence of PALB2 which serves as the bridging protein. Interacts with POLH; the interaction is direct. Interacts with the TREX-2 complex subunits PCID2 and SEM1. Interacts with HSF2BP and BRME1; the interaction with HSF2BP is direct and allows the formation of a ternary complex. The complex BRME1:HSF2BP:BRCA2 interacts with SPATA22, MEIOB and RAD51. Post-translationally, phosphorylated by ATM upon irradiation-induced DNA damage. Phosphorylation by CHEK1 and CHEK2 regulates interaction with RAD51. Phosphorylation at Ser-3222 by CDK1 and CDK2 is low in S phase when recombination is active, but increases as cells progress towards mitosis; this phosphorylation prevents homologous recombination-dependent repair during S phase and G2 by inhibiting RAD51 binding. Ubiquitinated in the absence of DNA damage; this does not lead to proteasomal degradation. In contrast, ubiquitination in response to DNA damage leads to proteasomal degradation. Highest expression in testis. Also expressed in spleen, skeletal muscle, thymus, mammary gland, heart, ovary, prostate, liver, lung, kidney and brain.

The protein resides in the nucleus. It localises to the cytoplasm. Its subcellular location is the cytoskeleton. It is found in the microtubule organizing center. The protein localises to the centrosome. Functionally, involved in double-strand break repair and/or homologous recombination. Binds RAD51 and potentiates recombinational DNA repair by promoting assembly of RAD51 onto single-stranded DNA (ssDNA). Acts by targeting RAD51 to ssDNA over double-stranded DNA, enabling RAD51 to displace replication protein-A (RPA) from ssDNA and stabilizing RAD51-ssDNA filaments by blocking ATP hydrolysis. Part of a PALB2-scaffolded HR complex containing RAD51C and which is thought to play a role in DNA repair by HR. May participate in S phase checkpoint activation. Binds selectively to ssDNA, and to ssDNA in tailed duplexes and replication fork structures. May play a role in the extension step after strand invasion at replication-dependent DNA double-strand breaks; together with PALB2 is involved in both POLH localization at collapsed replication forks and DNA polymerization activity. In concert with NPM1, regulates centrosome duplication. Interacts with the TREX-2 complex (transcription and export complex 2) subunits PCID2 and SEM1, and is required to prevent R-loop-associated DNA damage and thus transcription-associated genomic instability, independently of its known role in homologous recombination. The protein is Breast cancer type 2 susceptibility protein homolog of Rattus norvegicus (Rat).